The primary structure comprises 284 residues: 2-dehydro-3-deoxyphosphooctonate aldolase (284 aa).

This sequence belongs to the KdsA family.

It localises to the cytoplasm. The catalysed reaction is D-arabinose 5-phosphate + phosphoenolpyruvate + H2O = 3-deoxy-alpha-D-manno-2-octulosonate-8-phosphate + phosphate. It functions in the pathway carbohydrate biosynthesis; 3-deoxy-D-manno-octulosonate biosynthesis; 3-deoxy-D-manno-octulosonate from D-ribulose 5-phosphate: step 2/3. Its pathway is bacterial outer membrane biogenesis; lipopolysaccharide biosynthesis. In Mannheimia succiniciproducens (strain KCTC 0769BP / MBEL55E), this protein is 2-dehydro-3-deoxyphosphooctonate aldolase.